The following is a 216-amino-acid chain: 3-keto-L-gulonate-6-phosphate decarboxylase UlaD (216 aa).

Asp11 is a binding site for substrate. Positions 33 and 62 each coordinate Mg(2+). Arg192 is a substrate binding site.

The protein belongs to the HPS/KGPDC family. KGPDC subfamily. Homodimer. Requires Mg(2+) as cofactor.

It carries out the reaction 3-dehydro-L-gulonate 6-phosphate + H(+) = L-xylulose 5-phosphate + CO2. The protein operates within cofactor degradation; L-ascorbate degradation; D-xylulose 5-phosphate from L-ascorbate: step 2/4. Its function is as follows. Catalyzes the decarboxylation of 3-keto-L-gulonate-6-P into L-xylulose-5-P. Is involved in the anaerobic L-ascorbate utilization. The chain is 3-keto-L-gulonate-6-phosphate decarboxylase UlaD from Shigella boydii serotype 18 (strain CDC 3083-94 / BS512).